A 327-amino-acid chain; its full sequence is Auxin-responsive protein IAA18 (327 aa).

3 disordered regions span residues 26 to 45 (VKEA…DEDK), 52 to 98 (GLPG…IGTT), and 180 to 202 (NLTN…DDKA). An EAR-like (transcriptional repression) motif is present at residues 49-53 (LKLGL). Residues 58-69 (QEERAADSREKI) are compositionally biased toward basic and acidic residues. Low complexity predominate over residues 70–82 (QQQQRESSSEPSI). The segment covering 180-189 (NLTNGSSFKQ) has biased composition (polar residues). Basic and acidic residues predominate over residues 190–202 (SPERQNDEADDKA). One can recognise a PB1 domain in the interval 209–313 (RPLVKINMDG…TVKRLRVMRR (105 aa)).

Belongs to the Aux/IAA family. As to quaternary structure, homodimers and heterodimers. Highly expressed in flowers. Expressed in roots and etiolated seedlings.

It localises to the nucleus. In terms of biological role, aux/IAA proteins are short-lived transcriptional factors that function as repressors of early auxin response genes at low auxin concentrations. This Oryza sativa subsp. japonica (Rice) protein is Auxin-responsive protein IAA18 (IAA18).